Reading from the N-terminus, the 585-residue chain is Bestrophin-1 (585 aa).

At 1–31 (MTITYTSQVANARLGSFSRLLLCWRGSIYKL) the chain is on the cytoplasmic side. Residue alanine 10 participates in Ca(2+) binding. The helical transmembrane segment at 32-51 (LYGEFFIFLLCYYIIRFIYR) threads the bilayer. Topologically, residues 52–60 (LALTEEQQL) are extracellular. A helical membrane pass occupies residues 61–82 (MFEKLTLYCDSYIQLIPISFVL). Residues 83-237 (GFYVTLVVTR…DWISIPLVYT (155 aa)) lie on the Cytoplasmic side of the membrane. The helical transmembrane segment at 238–255 (QVVTVAVYSFFLTCLVGR) threads the bilayer. Topologically, residues 256-274 (QFLNPAKAYPGHELDLVVP) are extracellular. Residues 275 to 288 (VFTFLQFFFYVGWL) form a helical membrane-spanning segment. The Cytoplasmic portion of the chain corresponds to 289–585 (KVAEQLINPF…ALENRDEAHS (297 aa)). Ca(2+) is bound by residues glutamine 293, asparagine 296, aspartate 301, and aspartate 304. Residues 346-379 (PYTAASAQFRRASFMGSTFNISLNKEEMEFQPNQ) are auto-inhibitory segment.

Belongs to the anion channel-forming bestrophin (TC 1.A.46) family. Calcium-sensitive chloride channel subfamily. Interacts with YWHAG; this interaction promotes the ligand-gated L-glutamate channel activity leading to the positive regulation of NMDA glutamate receptor activity through the L-glutamate secretion.

It is found in the cell membrane. Its subcellular location is the basolateral cell membrane. The enzyme catalyses chloride(in) = chloride(out). The catalysed reaction is hydrogencarbonate(in) = hydrogencarbonate(out). It catalyses the reaction 4-aminobutanoate(in) = 4-aminobutanoate(out). It carries out the reaction L-glutamate(out) = L-glutamate(in). Functionally, ligand-gated anion channel that allows the movement of anions across cell membranes when activated by calcium (Ca2+). Allows the movement of chloride and hydrogencarbonate. Found in a partially open conformation leading to significantly smaller chloride movement. Upon F2R/PAR-1 activation, the sequestered calcium is released into the cytosol of astrocytes, leading to the (Ca2+)-dependent release of L-glutamate into the synaptic cleft that targets the neuronal postsynaptic GRIN2A/NMDAR receptor resulting in the synaptic plasticity regulation. Upon activation of the norepinephrine-alpha-1 adrenergic receptor signaling pathway, transports as well D-serine than L-glutamate in a (Ca2+)-dependent manner, leading to activation of adjacent NMDAR receptors and therefore regulates the heterosynaptic long-term depression and metaplasticity during initial memory acquisition. Releases the 4-aminobutanoate neurotransmitter in a (Ca2+)-dependent manner, and participates in its tonic release from cerebellar glial cells. This chain is Bestrophin-1 (BEST1), found in Macaca fascicularis (Crab-eating macaque).